We begin with the raw amino-acid sequence, 296 residues long: MFKSGFVTIVGRPNVGKSTLLNAIMKEKLSIVSCRPQTTRNNIQTILTEDNYQLVFVDTPGIHKPKHKLGEYMVKSASDAMKDVDLVLFLINPDEKPGRGDLFIIEQLKEVKVPVFLVLNKIDENPQEKVAETLKIYSELMEFEEIIPISALKGKNIDLLKELMFKYIPEGPQYYPEDMIIDQNERFIVAEIVREKALRLLSEEVPHGIAVEILQMKKNEKGTYHIEGNILCEKNSHKPIIIGKGGSKLKKISQYARQDIEAFLQSKVYIRLWVKVKEEWRDNQSLLKELGYKKMK.

Residues 3–170 (KSGFVTIVGR…KELMFKYIPE (168 aa)) form the Era-type G domain. The G1 stretch occupies residues 11–18 (GRPNVGKS). GTP is bound at residue 11-18 (GRPNVGKS). A G2 region spans residues 37–41 (QTTRN). The segment at 58–61 (DTPG) is G3. GTP-binding positions include 58–62 (DTPGI) and 120–123 (NKID). A G4 region spans residues 120 to 123 (NKID). The interval 149–151 (ISA) is G5. The 78-residue stretch at 201–278 (LSEEVPHGIA…YIRLWVKVKE (78 aa)) folds into the KH type-2 domain.

It belongs to the TRAFAC class TrmE-Era-EngA-EngB-Septin-like GTPase superfamily. Era GTPase family. As to quaternary structure, monomer.

Its subcellular location is the cytoplasm. The protein resides in the cell membrane. In terms of biological role, an essential GTPase that binds both GDP and GTP, with rapid nucleotide exchange. Plays a role in 16S rRNA processing and 30S ribosomal subunit biogenesis and possibly also in cell cycle regulation and energy metabolism. This is GTPase Era from Clostridium botulinum (strain Langeland / NCTC 10281 / Type F).